A 366-amino-acid chain; its full sequence is C-X-C chemokine receptor type 3 (366 aa).

The Extracellular segment spans residues 1–55 (MVPEMSERQEFQASEFAYLLENSSYDYGENETYFCCTSPPCPQDFSLNFDRTFLP). A glycan (N-linked (GlcNAc...) asparagine) is linked at asparagine 22. Tyrosine 25 and tyrosine 27 each carry sulfotyrosine. An N-linked (GlcNAc...) asparagine glycan is attached at asparagine 30. Residues 56–76 (VLYSLLFVLGLLGNGVVAVVL) traverse the membrane as a helical segment. The Cytoplasmic portion of the chain corresponds to 77–88 (LSQRAALSSTDT). The helical transmembrane segment at 89–109 (FLLHLAVADALLVLTLPLWAV) threads the bilayer. Residues 110–124 (DAAIQWVFGSGLCKV) are Extracellular-facing. The cysteines at positions 122 and 201 are disulfide-linked. A helical transmembrane segment spans residues 125-145 (AGALFNINFYAGALLLACISF). Residues 146 to 167 (DRYLSIVHATQFYRRGPPARVA) are Cytoplasmic-facing. Residues 168-188 (LTCVAVWGLCLLFALPDFIFL) form a helical membrane-spanning segment. The Extracellular portion of the chain corresponds to 189-221 (SSHHDNRLNATHCQYNFPQEGRTALRVLQLVAG). An N-linked (GlcNAc...) asparagine glycan is attached at asparagine 197. Residues 222 to 242 (FLLPLLVMAYCYARILTVLLV) traverse the membrane as a helical segment. Residues 243-254 (SRGQRRLRAMRL) lie on the Cytoplasmic side of the membrane. Residues 255–275 (VVVVVVAFALCWTPYHLVVLV) traverse the membrane as a helical segment. The Extracellular portion of the chain corresponds to 276-299 (DTLMDLGALARNCGRESRVDVAKS). Residues 300–320 (VTSGMGYMHCCLNPLLYAFVG) form a helical membrane-spanning segment. The Cytoplasmic segment spans residues 321–366 (VKFRERMWVLLMRLGCPDQRGHQRQPSASRRDSSWSETTEASYSGL). Residues 339–366 (QRGHQRQPSASRRDSSWSETTEASYSGL) form a disordered region. A compositionally biased stretch (polar residues) spans 355-366 (WSETTEASYSGL).

Belongs to the G-protein coupled receptor 1 family. As to quaternary structure, homomer. Forms heteromers with ACKR4. Interacts with PF4/CXCL4. In terms of processing, sulfation on Tyr-25 and Tyr-27 is essential for CXCL10 binding. Post-translationally, N-glycosylated.

It localises to the cell membrane. Receptor for the C-X-C chemokine CXCL9, CXCL10 and CXCL11 and mediates the proliferation, survival and angiogenic activity of mesangial cells through a heterotrimeric G-protein signaling pathway. Probably promotes cell chemotaxis response. Binds to CCL21. Upon activation by PF4, induces activated T-lymphocytes migration mediated via downstream Ras/extracellular signal-regulated kinase (ERK) signaling. This is C-X-C chemokine receptor type 3 (CXCR3) from Capra hircus (Goat).